The sequence spans 686 residues: MDASIGDPRLTSVEAAFEKNPLPGFSWLVTPRAMAVAVLLGIVFCFVGMRIQMMTGFVPALNMPVTVLSFFLLKVLARQLQKWRLTVVPFTRQENMFLITCVITCLNLAITGGFATALTGMGTIVAKTLADDLDPRDIIDYIPTGKLIIYFFLIGMAGVLSNIPLNQIMIIDYQLLFPTGSVIGHLINSFHTPEGAYIAKMQVMTIFKVFFGSFSWSIFQWFYSSGSGCGFSSFPTFGLELYKRRFYIDFSATYIGVGMMCPHIVNFGLLFGAIISWGFLYPYLETKHGEWYQTDSPSNLDGLNGYKVFISVTLIVTDGLINFLILVTSAAINFYHIRQQQQQTSGLASYISKNPSMNYDERKRIEMFLSSKIPMFVPVAAYVAWTAISMVAMPAMFDQIKYYHVGVLYLAIPVVGFCNTYATGLTDWSVSNTYAKFSPFIFAAWIARPGAIVASLLVSGITMASLHVSSQAMQDLKSAHMTLTSPRAMIAGQVFGVALSSVVSPCIFRAFEKAAKPGAPLGSKDSVYPCPYAGLYRAICIIGMGGVKGLPKYCVELCVIAVLVTIAIDALVLVSQLKGWRLHLYIPSMTVIALPFFAGSYFTLDMCLGGLLLLLWKKIDTMSAEILSAAVAAGLICGEGLFTLPSALLNMFKVLPPMCMKFLPSGQEVEVVDSFLNSSGGTVPKT.

14 helical membrane-spanning segments follow: residues 27-47, 53-73, 96-116, 151-171, 203-223, 264-284, 308-328, 373-393, 405-425, 441-461, 488-508, 554-574, 596-616, and 629-649; these read WLVTPRAMAVAVLLGIVFCFV, MMTGFVPALNMPVTVLSFFLL, MFLITCVITCLNLAITGGFAT, FFLIGMAGVLSNIPLNQIMII, VMTIFKVFFGSFSWSIFQWFY, IVNFGLLFGAIISWGFLYPYL, VFISVTLIVTDGLINFLILVT, IPMFVPVAAYVAWTAISMVAM, VGVLYLAIPVVGFCNTYATGL, IFAAWIARPGAIVASLLVSGI, AMIAGQVFGVALSSVVSPCIF, CVELCVIAVLVTIAIDALVLV, FFAGSYFTLDMCLGGLLLLLW, and AAVAAGLICGEGLFTLPSALL.

It belongs to the YSL (TC 2.A.67.2) family.

It is found in the membrane. May be involved in the transport of nicotianamine-chelated metals. This chain is Probable metal-nicotianamine transporter YSL4 (YSL4), found in Oryza sativa subsp. japonica (Rice).